Consider the following 115-residue polypeptide: NADH-ubiquinone oxidoreductase chain 3 (115 aa).

The next 3 membrane-spanning stretches (helical) occupy residues 3-23 (IMLTLLTNVTLASLLVLIAFW), 55-75 (FFLVAITFLLFDLEIALLLPL), and 86-106 (TMLTMALFLLILLAASLAYEW).

It belongs to the complex I subunit 3 family. In terms of assembly, core subunit of respiratory chain NADH dehydrogenase (Complex I) which is composed of 45 different subunits. Interacts with TMEM186. Interacts with TMEM242.

It is found in the mitochondrion inner membrane. It catalyses the reaction a ubiquinone + NADH + 5 H(+)(in) = a ubiquinol + NAD(+) + 4 H(+)(out). Its function is as follows. Core subunit of the mitochondrial membrane respiratory chain NADH dehydrogenase (Complex I) which catalyzes electron transfer from NADH through the respiratory chain, using ubiquinone as an electron acceptor. Essential for the catalytic activity of complex I. The protein is NADH-ubiquinone oxidoreductase chain 3 of Sus scrofa (Pig).